The primary structure comprises 188 residues: Protein SSX3 (188 aa).

Residues 20–83 (KIQKAFDDIA…KRVTDFQGND (64 aa)) form the KRAB-related domain. The interval 113 to 162 (PKKPAEEGNVSKEVPEASGPQNDGKQLCPPGKPTTSEKINMISGPKRGEH) is disordered. Residues 115–127 (KPAEEGNVSKEVP) are compositionally biased toward basic and acidic residues. Ser123 bears the Phosphoserine mark.

The protein belongs to the SSX family. Interacts with SSX2IP.

Its function is as follows. Could act as a modulator of transcription. The sequence is that of Protein SSX3 (SSX3) from Homo sapiens (Human).